A 702-amino-acid chain; its full sequence is MADSGLLLKRGSCRSTWLRVRKARPQLILSRRPRRRLGSLRWCGRRRLRWRLLQAQASGVDWREGARQVSRAAAARRPNTATPSPIPSPTPASEPESEPELESASSCHRPLLIPPVRPVGPGRALLLLPVEQGFTFSGICRVTCLYGQVQVFGFTISQGQPAQDIFSVYTHSCLSIHALHYSQPEKSKKELKREARNLLKSHLNLDDRRWSMQNFSPQCSIVLLEHLKTATVNFITSYPGSSYIFVQESPTPQIKPEYLALRSVGIRREKKRKGLQLTESTLSALEELVNVSCEEVDGCPVILVCGSQDVGKSTFNRYLINHLLNSLPCVDYLECDLGQTEFTPPGCISLLNITEPVLGPPFTHLRTPQKMVYYGKPSCKNNYENYIDIVKYVFSAYKRESPLIVNTMGWVSDQGLLLLIDLIRLLSPSHVVQFRSDHSKYMPDLTPQYVDDMDGLYTKSKTKMRNRRFRLAAFADALEFADEEKESPVEFTGHKLIGVYTDFAFRITPRNRESHNKILRDLSILSYLSQLQPPMPKPLSPLHSLTPYQVPFNAVALRITHSDVAPTHILYAVNASWVGLCKIQDDVRGYTNGPILLAQTPICDCLGFGICRGIDMEKRLYHILTPVPPEELRTVNCLLVGAIAIPHCVLKCQRGIEGTVPYVTTDYNFKLPGASEKIGAREPEEAHKEKPYRRPKFCRKMK.

Residue A2 is modified to N-acetylalanine. Positions 31–47 (RRPRRRLGSLRWCGRRR) match the Nucleolar localization signal motif. Positions 69–101 (VSRAAAARRPNTATPSPIPSPTPASEPESEPEL) are disordered. Residues 71-83 (RAAAARRPNTATP) show a composition bias toward low complexity. 306–313 (GSQDVGKS) provides a ligand contact to ATP. The interaction with LAS1L stretch occupies residues 480–702 (FADEEKESPV…RRPKFCRKMK (223 aa)). K485 participates in a covalent cross-link: Glycyl lysine isopeptide (Lys-Gly) (interchain with G-Cter in SUMO2). At S487 the chain carries Phosphoserine. Positions 680 to 689 (AREPEEAHKE) are enriched in basic and acidic residues. The segment at 680–702 (AREPEEAHKEKPYRRPKFCRKMK) is disordered. Residues 690–702 (KPYRRPKFCRKMK) show a composition bias toward basic residues.

It belongs to the Clp1 family. NOL9/GRC3 subfamily. As to quaternary structure, interacts with PELP1, WDR18 and SENP3. Interacts with LAS1L to form an ITS2 pre-rRNA endonuclease-kinase complex.

The protein localises to the nucleus. It is found in the nucleolus. The enzyme catalyses a 5'-end dephospho-2'-deoxyribonucleoside-DNA + ATP = a 5'-end 5'-phospho-2'-deoxyribonucleoside-DNA + ADP + H(+). It carries out the reaction a 5'-end dephospho-ribonucleoside-RNA + ATP = a 5'-end 5'-phospho-ribonucleoside-RNA + ADP + H(+). Functionally, polynucleotide kinase that can phosphorylate the 5'-hydroxyl groups of single-stranded and double-stranded RNA and DNA substrates. Involved in rRNA processing and its kinase activity is required for the processing of the 32S precursor into 5.8S and 28S rRNAs, more specifically for the generation of the major 5.8S(S) form. Required for the efficient pre-rRNA processing of internal transcribed spacer 2 (ITS2). Associates with LAS1L to form an ITS2 pre-rRNA endonuclease-kinase complex and is responsible for the transport of this complex into the nucleolus. The polypeptide is Polynucleotide 5'-hydroxyl-kinase NOL9 (NOL9) (Homo sapiens (Human)).